The chain runs to 43 residues: VVSCADITALAARQGLFTSDQDLYTDSRMGQLNVLTGTQGEIR.

This sequence belongs to the peroxidase family. Classical plant (class III) peroxidase subfamily. Requires Ca(2+) as cofactor. The cofactor is heme b.

The catalysed reaction is 2 a phenolic donor + H2O2 = 2 a phenolic radical donor + 2 H2O. Removal of H(2)O(2), oxidation of toxic reductants, biosynthesis and degradation of lignin, suberization, auxin catabolism, response to environmental stresses such as wounding, pathogen attack and oxidative stress. These functions might be dependent on each isozyme/isoform in each plant tissue. The chain is Peroxidase from Cynara cardunculus var. scolymus (Globe artichoke).